The sequence spans 252 residues: Ribosomal RNA small subunit methyltransferase J (252 aa).

Residues 101–102 (RD), 117–118 (ER), 153–154 (SS), and Asp171 contribute to the S-adenosyl-L-methionine site.

The protein belongs to the methyltransferase superfamily. RsmJ family.

It localises to the cytoplasm. It catalyses the reaction guanosine(1516) in 16S rRNA + S-adenosyl-L-methionine = N(2)-methylguanosine(1516) in 16S rRNA + S-adenosyl-L-homocysteine + H(+). Specifically methylates the guanosine in position 1516 of 16S rRNA. The polypeptide is Ribosomal RNA small subunit methyltransferase J (Salmonella heidelberg (strain SL476)).